The sequence spans 542 residues: Esterase S (542 aa).

The signal sequence occupies residues 1-22 (MTQILLPIALLCLFAASTLSNP). Cys81 and Cys100 are disulfide-bonded. An N-linked (GlcNAc...) asparagine glycan is attached at Asn110. Ser204 functions as the Acyl-ester intermediate in the catalytic mechanism. Cys256 and Cys268 form a disulfide bridge. An N-linked (GlcNAc...) asparagine glycan is attached at Asn396. Cys507 and Cys528 are oxidised to a cystine.

It belongs to the type-B carboxylesterase/lipase family. As to quaternary structure, monomer. As to expression, specifically expressed in the ejaculatory bulbs of male.

Its subcellular location is the secreted. It carries out the reaction a carboxylic ester + H2O = an alcohol + a carboxylate + H(+). Functionally, transferred from the ejaculatory bulbs of males to the female genitals upon copulation, plays an important role in the reproductive biology. The sequence is that of Esterase S (EstS) from Drosophila virilis (Fruit fly).